The following is a 626-amino-acid chain: PEX5-related protein (626 aa).

Disordered regions lie at residues 1 to 20, 118 to 167, and 181 to 235; these read MYQGHMQKSKEQGYGKLSSD, VSQT…SSLD, and KFHG…ASEL. The span at 181 to 198 shows a compositional bias: basic and acidic residues; it reads KFHGDRNTKGHPMAERKS. Position 205 is a phosphoserine (S205). A compositionally biased stretch (low complexity) spans 225-235; it reads SALNSESASEL. Phosphoserine is present on residues S253, S257, and S261. 3 TPR repeats span residues 326–359, 360–393, and 395–427; these read WPGAFEEGLKRLKEGDLPVTILFMEAAILQDPGD, AEAWQFLGITQAENENEQAAIVALQRCLELQPNN, and KALMALAVSYTNTGHQQDACDALKNWIKQNPKY. Phosphoserine is present on residues S445 and S447. TPR repeat units follow at residues 474–507, 509–541, and 543–575; these read PDLQTGLGVLFHLSGEFNRAIDAFNAALTVRPED, SLWNRLGATLANGDRSEEAVEAYTRALEIQPGF, and RSRYNLGISCINLGAYREAVSNFLTALSLQRKS.

It belongs to the peroxisomal targeting signal receptor family. In terms of assembly, interacts with RAB8B. Forms an obligate 4:4 complex with HCN2. May interact with the C-terminal PTS1-type tripeptide peroxisomal targeting signal (SKL-type); the relevance of such interaction is however unclear. Interacts with HCN3. Interacts with HCN4 with a 4:4 HCN4:PEX5L stoichiometry; reduces the effects of cAMP on the voltage-dependence and rate of activation of HCN4. Mainly expressed in brain. Also expressed in pancreas, testis and pituitary.

The protein resides in the cytoplasm. Its subcellular location is the membrane. Accessory subunit of hyperpolarization-activated cyclic nucleotide-gated (HCN) channels, regulating their cell-surface expression and cyclic nucleotide dependence. The chain is PEX5-related protein (PEX5L) from Homo sapiens (Human).